The sequence spans 1299 residues: MAP3K epsilon protein kinase 1 (1299 aa).

One can recognise a Protein kinase domain in the interval 20–274 (YMLGDEIGKG…AKTLLSHPWI (255 aa)). 2 HEAT repeats span residues 25–62 (EIGK…EDLN) and 86–125 (LKTK…TVYI). ATP-binding positions include 26–34 (IGKGAYGRV) and lysine 49. The active-site Proton acceptor is the aspartate 144. The HEAT 3 repeat unit spans residues 218-256 (PYYDLQPMPALFRIVQDDSPPIPDSLSPDITDFLRQCFK). Disordered stretches follow at residues 291-458 (IRYM…GNEL) and 483-509 (GKLN…DGGK). Low complexity predominate over residues 374 to 385 (SSLQSSTCSISS). 2 stretches are compositionally biased toward polar residues: residues 415–432 (ATKQ…QRSH) and 488–501 (ASAS…NQGD). 16 HEAT repeats span residues 532-570 (SNDG…LLPL), 611-649 (VFVT…DNID), 653-694 (NACL…SSSL), 698-736 (MFIA…VFKL), 743-780 (NDFC…SGQL), 781-820 (DQHE…PDGD), 868-900 (QPEQ…HIAG), 901-939 (LEKH…AASA), 955-994 (SDTS…ADTT), 998-1036 (YMCS…DPNC), 1043-1081 (ADAI…INKR), 1085-1122 (QAAE…ASRN), 1125-1164 (EQLR…NDNR), 1186-1210 (CPER…RINT), 1211-1249 (TLAV…HHPR), and 1279-1299 (QVLV…NTVL). The disordered stretch occupies residues 795 to 852 (VLKTRPGGGEEPSNSQRSDLYQPDGDRPRSSSAALDATEDVKQHHRISISSNRTSTDK).

This sequence belongs to the protein kinase superfamily. Ser/Thr protein kinase family. Post-translationally, autophosphorylated. In terms of tissue distribution, expressed in both the sporophytic and the gametophytic tissues, especially in dividing cells.

It localises to the cytoplasm. The protein resides in the cytoskeleton. Its subcellular location is the microtubule organizing center. The protein localises to the nucleus. It is found in the nucleolus. It localises to the cell membrane. The enzyme catalyses L-seryl-[protein] + ATP = O-phospho-L-seryl-[protein] + ADP + H(+). The catalysed reaction is L-threonyl-[protein] + ATP = O-phospho-L-threonyl-[protein] + ADP + H(+). Serine/threonine-protein kinase involved in the spatial and temporal control system organizing cortical activities in mitotic and postmitotic cells. Required for the normal functioning of the plasma membrane in developing pollen. Involved in the regulation of cell expansion and embryo development. The chain is MAP3K epsilon protein kinase 1 from Brassica napus (Rape).